The primary structure comprises 608 residues: uncharacterized protein (608 aa).

Positions 1-21 (MHTNSPLRADNQDLETQPLLR) are disordered. Residue T24 is modified to Phosphothreonine. Position 27 is a phosphoserine (S27). A helical transmembrane segment spans residues 55 to 75 (IIYLLGIVLLSFFGVSIVQYI). N115, N141, N169, N407, N425, N449, N453, N527, and N580 each carry an N-linked (GlcNAc...) asparagine glycan.

It localises to the membrane. This is an uncharacterized protein from Saccharomyces cerevisiae (strain ATCC 204508 / S288c) (Baker's yeast).